The chain runs to 286 residues: Diaminopimelate epimerase (286 aa).

2 residues coordinate substrate: asparagine 12 and asparagine 67. Catalysis depends on cysteine 76, which acts as the Proton donor. Substrate-binding positions include glycine 77–asparagine 78, asparagine 165, asparagine 198, and glutamate 216–arginine 217. Cysteine 225 serves as the catalytic Proton acceptor. Residue glycine 226–threonine 227 coordinates substrate.

The protein belongs to the diaminopimelate epimerase family. Homodimer.

The protein localises to the cytoplasm. The catalysed reaction is (2S,6S)-2,6-diaminopimelate = meso-2,6-diaminopimelate. It functions in the pathway amino-acid biosynthesis; L-lysine biosynthesis via DAP pathway; DL-2,6-diaminopimelate from LL-2,6-diaminopimelate: step 1/1. Functionally, catalyzes the stereoinversion of LL-2,6-diaminopimelate (L,L-DAP) to meso-diaminopimelate (meso-DAP), a precursor of L-lysine. The protein is Diaminopimelate epimerase of Methanothermobacter thermautotrophicus (strain ATCC 29096 / DSM 1053 / JCM 10044 / NBRC 100330 / Delta H) (Methanobacterium thermoautotrophicum).